The following is an 841-amino-acid chain: Translation initiation factor IF-2 (841 aa).

Basic and acidic residues-rich tracts occupy residues 1-12 (MSDNEIKNEAPK), 50-92 (EAAL…EATK), 114-170 (EQPK…REEA), 188-202 (READRDNDRRSEANR), and 213-235 (KKGDREDKNERNADRRNQKDVKG). Disordered stretches follow at residues 1–24 (MSDNEIKNEAPKKLSLQRRTKTTV) and 50–246 (EAAL…GSAL). Residues 340–510 (TRAPVVTIMG…LLQSEVLELT (171 aa)) form the tr-type G domain. The tract at residues 349–356 (GHVDHGKT) is G1. Residue 349-356 (GHVDHGKT) participates in GTP binding. Residues 374-378 (GITQH) are G2. Residues 396–399 (DTPG) form a G3 region. Residues 396 to 400 (DTPGH) and 450 to 453 (NKID) each bind GTP. Residues 450 to 453 (NKID) are G4. Positions 486–488 (SAK) are G5.

This sequence belongs to the TRAFAC class translation factor GTPase superfamily. Classic translation factor GTPase family. IF-2 subfamily.

It localises to the cytoplasm. Its function is as follows. One of the essential components for the initiation of protein synthesis. Protects formylmethionyl-tRNA from spontaneous hydrolysis and promotes its binding to the 30S ribosomal subunits. Also involved in the hydrolysis of GTP during the formation of the 70S ribosomal complex. The sequence is that of Translation initiation factor IF-2 from Actinobacillus pleuropneumoniae serotype 3 (strain JL03).